A 294-amino-acid polypeptide reads, in one-letter code: MRVLVGGGTGFIGTALTQLLKARGHEVTLISRKPGPDRITWDDLTTSGLPRCDAAVNLAGENILNPLRRWNAAFQKEVLSSRLETTQTLARAIAKAPQPPQAWVLVTGVAYYQPSLTAEYDEDSPGGDFDFFSNLVTKWEAAARLPGDSTRQVVVRSGVVLGRGGGAIGHMLLPFRLGLGGPIGSGHQFFPWIHIRDLAGILAHALETSHVQGILNGVAPASSTTNAEFARALGTALGRPAFIPLPSAVVQAVFGRERAVMLLEGQKVVPRRTLAAGYRYSFPELGAALKEVIA.

NADP(+) is bound by residues 31–32 (SR), 58–59 (LA), Glu-77, Arg-82, and Val-160.

This sequence belongs to the NAD(P)-dependent epimerase/dehydratase family. SDR39U1 subfamily.

Its function is as follows. Putative NADP-dependent oxidoreductase. The polypeptide is Epimerase family protein SDR39U1 (SDR39U1) (Bos taurus (Bovine)).